The primary structure comprises 355 residues: Heat-inducible transcription repressor HrcA (355 aa).

The protein belongs to the HrcA family.

In terms of biological role, negative regulator of class I heat shock genes (grpE-dnaK-dnaJ and groELS operons). Prevents heat-shock induction of these operons. This chain is Heat-inducible transcription repressor HrcA, found in Nitratidesulfovibrio vulgaris (strain DSM 19637 / Miyazaki F) (Desulfovibrio vulgaris).